The sequence spans 434 residues: ATP-dependent protease ATPase subunit HslU (434 aa).

ATP contacts are provided by residues Val-18, 60–65, Asp-247, Glu-312, and Arg-384; that span reads GVGKTE.

It belongs to the ClpX chaperone family. HslU subfamily. In terms of assembly, a double ring-shaped homohexamer of HslV is capped on each side by a ring-shaped HslU homohexamer. The assembly of the HslU/HslV complex is dependent on binding of ATP.

Its subcellular location is the cytoplasm. In terms of biological role, ATPase subunit of a proteasome-like degradation complex; this subunit has chaperone activity. The binding of ATP and its subsequent hydrolysis by HslU are essential for unfolding of protein substrates subsequently hydrolyzed by HslV. HslU recognizes the N-terminal part of its protein substrates and unfolds these before they are guided to HslV for hydrolysis. This is ATP-dependent protease ATPase subunit HslU from Phenylobacterium zucineum (strain HLK1).